The primary structure comprises 469 residues: Uridine kinase-like protein 4 (469 aa).

The interval 46–249 is uridine kinase; that stretch reads QRQPFVIGVA…IVQHICTKLG (204 aa). The segment at 259 to 469 is uracil phosphoribosyltransferase; that stretch reads NLYVIHSTFQ…GDRYFGTDDD (211 aa). Residues lysine 283, arginine 292, and 326-329 contribute to the GTP site; that span reads CKRL. The 5-phospho-alpha-D-ribose 1-diphosphate site is built by arginine 336 and arginine 361. Arginine 381 contacts GTP. Residues aspartate 387, 392–395, and glutamate 458 each bind 5-phospho-alpha-D-ribose 1-diphosphate; that span reads TGNS. 457-459 provides a ligand contact to uracil; that stretch reads GEF.

The protein in the N-terminal section; belongs to the uridine kinase family. This sequence in the C-terminal section; belongs to the UPRTase family. Mg(2+) serves as cofactor.

It carries out the reaction UMP + diphosphate = 5-phospho-alpha-D-ribose 1-diphosphate + uracil. The catalysed reaction is cytidine + ATP = CMP + ADP + H(+). The enzyme catalyses uridine + ATP = UMP + ADP + H(+). The protein operates within pyrimidine metabolism; UMP biosynthesis via salvage pathway; UMP from uracil: step 1/1. It functions in the pathway pyrimidine metabolism; CTP biosynthesis via salvage pathway; CTP from cytidine: step 1/3. It participates in pyrimidine metabolism; UMP biosynthesis via salvage pathway; UMP from uridine: step 1/1. With respect to regulation, allosterically activated by GTP. Functionally, involved in the pyrimidine salvage pathway. The uracil phosphoribosyltransferase (UPRT) activity, that catalyzes the conversion of uracil and 5-phospho-alpha-D-ribose 1-diphosphate (PRPP) to UMP and diphosphate, is unsure. The sequence is that of Uridine kinase-like protein 4 (UKL4) from Arabidopsis thaliana (Mouse-ear cress).